A 207-amino-acid polypeptide reads, in one-letter code: Ribosomal RNA small subunit methyltransferase G (207 aa).

S-adenosyl-L-methionine is bound by residues glycine 77, phenylalanine 82, 100–102, and arginine 141; that span reads ERS.

Belongs to the methyltransferase superfamily. RNA methyltransferase RsmG family.

Its subcellular location is the cytoplasm. In terms of biological role, specifically methylates the N7 position of a guanine in 16S rRNA. This Borrelia hermsii (strain HS1 / DAH) protein is Ribosomal RNA small subunit methyltransferase G.